A 128-amino-acid polypeptide reads, in one-letter code: DNA-directed RNA polymerase subunit omega (128 aa).

The tract at residues 87–106 (ARSSQAAPKSAPGQEIGKSF) is disordered.

It belongs to the RNA polymerase subunit omega family. In terms of assembly, the RNAP catalytic core consists of 2 alpha, 1 beta, 1 beta' and 1 omega subunit. When a sigma factor is associated with the core the holoenzyme is formed, which can initiate transcription.

It catalyses the reaction RNA(n) + a ribonucleoside 5'-triphosphate = RNA(n+1) + diphosphate. Promotes RNA polymerase assembly. Latches the N- and C-terminal regions of the beta' subunit thereby facilitating its interaction with the beta and alpha subunits. The sequence is that of DNA-directed RNA polymerase subunit omega from Anaplasma marginale (strain Florida).